The following is a 26-amino-acid chain: Thioredoxin H-type (26 aa).

This sequence belongs to the thioredoxin family. Plant H-type subfamily.

Its subcellular location is the cytoplasm. Functionally, participates in various redox reactions through the reversible oxidation of the active center dithiol to a disulfide. The H form is known to activate a number of cytosolic enzymes. This chain is Thioredoxin H-type, found in Populus euphratica (Euphrates poplar).